The sequence spans 103 residues: Large ribosomal subunit protein bL21 (103 aa).

It belongs to the bacterial ribosomal protein bL21 family. As to quaternary structure, part of the 50S ribosomal subunit. Contacts protein L20.

Its function is as follows. This protein binds to 23S rRNA in the presence of protein L20. In Cupriavidus necator (strain ATCC 17699 / DSM 428 / KCTC 22496 / NCIMB 10442 / H16 / Stanier 337) (Ralstonia eutropha), this protein is Large ribosomal subunit protein bL21.